The following is a 582-amino-acid chain: Protein NRT1/ PTR FAMILY 5.2 (582 aa).

A run of 11 helical transmembrane segments spans residues 77 to 97 (WVGT…ALLG), 100 to 120 (ITFV…TLSV), 141 to 161 (ASVL…IGTG), 189 to 209 (FFNW…TVLV), 217 to 237 (WTLG…IFLL), 334 to 354 (PVLF…TLFV), 370 to 390 (IPPA…IVLY), 408 to 428 (ITLL…MIVA), 452 to 472 (LPLT…ADSF), 493 to 515 (GTSY…LSTV), and 538 to 558 (YYYL…LVVV).

It belongs to the major facilitator superfamily. Proton-dependent oligopeptide transporter (POT/PTR) (TC 2.A.17) family. In terms of tissue distribution, expressed in roots. Detected in shoots, leaves and flowers.

The protein localises to the membrane. In terms of biological role, peptide transporter involved in stress tolerance in seeds during germination and in defense against virulent bacterial pathogens. The sequence is that of Protein NRT1/ PTR FAMILY 5.2 (NPF5.2) from Arabidopsis thaliana (Mouse-ear cress).